The following is a 219-amino-acid chain: 2-hydroxy-3-keto-5-methylthiopentenyl-1-phosphate phosphatase (219 aa).

It belongs to the HAD-like hydrolase superfamily. MtnX family.

It catalyses the reaction 2-hydroxy-5-methylsulfanyl-3-oxopent-1-enyl phosphate + H2O = 1,2-dihydroxy-5-(methylsulfanyl)pent-1-en-3-one + phosphate. It participates in amino-acid biosynthesis; L-methionine biosynthesis via salvage pathway; L-methionine from S-methyl-5-thio-alpha-D-ribose 1-phosphate: step 4/6. Functionally, dephosphorylates 2-hydroxy-3-keto-5-methylthiopentenyl-1-phosphate (HK-MTPenyl-1-P) yielding 1,2-dihydroxy-3-keto-5-methylthiopentene (DHK-MTPene). In Bacillus thuringiensis subsp. konkukian (strain 97-27), this protein is 2-hydroxy-3-keto-5-methylthiopentenyl-1-phosphate phosphatase.